The chain runs to 342 residues: dTDP-3,4-didehydro-2,6-dideoxy-alpha-D-glucose 3-reductase (342 aa).

19–25 is a binding site for NADP(+); the sequence is CADIALR. R26 contributes to the substrate binding site. Residues 44–45, Y65, L81, and H86 contribute to the NADP(+) site; that span reads SR. The active-site Proton donor is K104. R172 and D184 together coordinate NADP(+). Positions 243 and 263 each coordinate substrate.

It belongs to the Gfo/Idh/MocA family.

The enzyme catalyses dTDP-4-dehydro-2,6-dideoxy-alpha-D-glucose + NADP(+) = dTDP-3,4-didehydro-2,6-dideoxy-alpha-D-glucose + NADPH + H(+). It participates in antibiotic biosynthesis; granaticin biosynthesis. Involved in the biosynthesis of the 2,6-deoxysugar, dTDP-L-rhodinose, attached to the benzoisochromane quinone chromophore to produce the aglycone antibiotics granaticin and granaticin B. Catalyzes the reduction of the C-3 keto moiety of dTDP-3,4-diketo-2,6-dideoxy-alpha-D-glucose to yield dTDP-4-keto-2,6-dideoxy-alpha-D-glucose. NADPH is the better reductant, however NADH can also be used. The polypeptide is dTDP-3,4-didehydro-2,6-dideoxy-alpha-D-glucose 3-reductase (Streptomyces violaceoruber).